The primary structure comprises 126 residues: Large ribosomal subunit protein bL20 (126 aa).

This sequence belongs to the bacterial ribosomal protein bL20 family.

In terms of biological role, binds directly to 23S ribosomal RNA and is necessary for the in vitro assembly process of the 50S ribosomal subunit. It is not involved in the protein synthesizing functions of that subunit. This is Large ribosomal subunit protein bL20 from Buchnera aphidicola subsp. Baizongia pistaciae (strain Bp).